The primary structure comprises 497 residues: Low affinity K(+) transporter 1 (497 aa).

The Extracellular portion of the chain corresponds to 1 to 29; it reads MFNHDWKYSINSKTFADLNIELFRNHKFK. Residues 30 to 50 form a helical membrane-spanning segment; it reads TVLNYIIGVVGWNGLKLALFV. Over 51 to 80 the chain is Cytoplasmic; it reads SDIYTCIKLLAFNSWSNNIIKPYLPFKISK. The chain crosses the membrane as a helical span at residues 81–101; sequence WLFSGCILASIVLLIWEAIAG. The Extracellular portion of the chain corresponds to 102-216; it reads MRIYKTGNIS…TNHEEAVILS (115 aa). Residues 217-237 traverse the membrane as a helical segment; it reads LMLFSFIIWALFVFKFLLAVI. Topologically, residues 238-497 are cytoplasmic; that stretch reads CSIFVYYKII…EDEDRTYNYT (260 aa). Phosphoserine is present on residues Ser-291 and Ser-319. Positions 420-469 are disordered; the sequence is EFHGPLDSMPNTTNNIRNFNSNSSRPRPPPLQTKSSINSKADSNDNGRIY. The segment covering 429–444 has biased composition (low complexity); it reads PNTTNNIRNFNSNSSR. Positions 451–465 are enriched in polar residues; sequence QTKSSINSKADSNDN.

The protein belongs to the KCH1 low affinity K(+) transporter family.

It localises to the vacuole membrane. It is found in the cell membrane. The catalysed reaction is K(+)(in) = K(+)(out). In terms of biological role, low affinity potassium transporter that, with PRM6/KCH2, participates in high-affinity Ca(2+) influx system (HACS) activation during the response to mating pheromone. Directly promotes K(+) influx and HACS may electrochemically respond to this K(+) influx. KCH1 and KCH2 act at the apex of the calcium signaling pathway that is used for survival during prolonged exposures to mating pheromones. This chain is Low affinity K(+) transporter 1, found in Saccharomyces cerevisiae (strain ATCC 204508 / S288c) (Baker's yeast).